The following is a 371-amino-acid chain: Protein SOMBRERO (371 aa).

An NAC domain is found at 17–166 (VPPGFRFHPT…GWVVCRVFKK (150 aa)). The DNA-binding element occupies 118–172 (IGLRKTLVFYTGRAPHGQKTEWIMHEYRLDDSENEIQEDGWVVCRVFKKKNHFRG). Disordered regions lie at residues 176–213 (EQEQ…LILH) and 316–355 (VQNH…NQRF). Residues 192 to 201 (NDHDHHHHID) show a composition bias toward basic and acidic residues. Composition is skewed to low complexity over residues 202–213 (SNSNNHSPLILH) and 340–349 (GNNNGGSSSS).

As to expression, accumulates in maturing root cap cells, in both COL and LRC cells.

Its subcellular location is the nucleus. Functionally, transcription regulator. Together with BRN1 and BRN2, regulates cellular maturation of root cap. Represses stem cell-like divisions in the root cap daughter cells, and thus promotes daughter cell fate. Inhibits expression of its positive regulator FEZ in a feedback loop for controlled switches in cell division plane. Promotes the expression of genes involved in secondary cell walls (SCW) biosynthesis. In Arabidopsis thaliana (Mouse-ear cress), this protein is Protein SOMBRERO (SMB).